The following is a 405-amino-acid chain: S-adenosylmethionine synthase (405 aa).

Residue 141-146 participates in ATP binding; the sequence is GQGSVD.

The protein belongs to the AdoMet synthase 2 family. The cofactor is Mg(2+).

The enzyme catalyses L-methionine + ATP + H2O = S-adenosyl-L-methionine + phosphate + diphosphate. The protein operates within amino-acid biosynthesis; S-adenosyl-L-methionine biosynthesis; S-adenosyl-L-methionine from L-methionine: step 1/1. In terms of biological role, catalyzes the formation of S-adenosylmethionine from methionine and ATP. This is S-adenosylmethionine synthase from Methanococcus maripaludis (strain C6 / ATCC BAA-1332).